The following is a 190-amino-acid chain: Threonylcarbamoyl-AMP synthase (190 aa).

The region spanning 7 to 190 (LGSIAQAVDV…ALTGERFRQG (184 aa)) is the YrdC-like domain.

It belongs to the SUA5 family. TsaC subfamily.

It is found in the cytoplasm. The enzyme catalyses L-threonine + hydrogencarbonate + ATP = L-threonylcarbamoyladenylate + diphosphate + H2O. Required for the formation of a threonylcarbamoyl group on adenosine at position 37 (t(6)A37) in tRNAs that read codons beginning with adenine. Catalyzes the conversion of L-threonine, HCO(3)(-)/CO(2) and ATP to give threonylcarbamoyl-AMP (TC-AMP) as the acyladenylate intermediate, with the release of diphosphate. The chain is Threonylcarbamoyl-AMP synthase from Enterobacter sp. (strain 638).